The following is a 250-amino-acid chain: Pre-protein VI (250 aa).

The propeptide occupies methionine 1–glycine 33. The segment at alanine 34–tyrosine 54 is amphipathic alpha-helix essential for membrane lytic activity. The involved in endosomal membrane lysis stretch occupies residues serine 36–asparagine 53. The interaction with hexon protein stretch occupies residues glycine 48–glutamine 74. The Nuclear export signal motif lies at leucine 67 to phenylalanine 76. Residues isoleucine 103–proline 148 form a disordered region. A Phosphoserine; by host modification is found at serine 124. Over residues glycine 127–threonine 140 the composition is skewed to basic and acidic residues. Positions lysine 131–proline 135 match the Nuclear localization signal motif. Residue threonine 143 is modified to Phosphothreonine; by host. A PPXY motif motif is present at residues proline 148 to tyrosine 151. Positions serine 231 to glutamine 242 match the Nuclear export signal motif. The interval leucine 233–leucine 239 is interaction with hexon protein. The interval glycine 240 to phenylalanine 250 is binds to importin alpha/beta, involved in hexon nuclear import. Residues lysine 245–arginine 248 carry the Nuclear localization signal motif.

This sequence belongs to the adenoviridae protein VI family. Interacts with hexon protein; this interaction allows nuclear import of hexon trimers and possibly pre-capsid assembly. Interacts (via C-terminal NLS) with importin alpha/beta. In terms of assembly, interacts (via PPxY motif) with host NEDD4 ubiquitine ligase; this interaction might play a role in virus intracellular transport during entry. Part of a complex composed of the core-capsid bridging protein, the endosome lysis protein VI and the hexon-linking protein VIII; these interactions bridge the virus core to the capsid. Interacts with peripentonal hexons; this interaction stabilizes the capsid by gluing two peripentonal hexons together and joining them with an adjacent group-of-nine hexon. As to quaternary structure, heterodimer with the viral protease; disulfide-linked. Interacts with the viral protease. Ubiquitinated by Nedd4 following partial capsid disassembly; which might play a role in intracellular virus movement during entry. In terms of processing, contains the major nuclear import and export signals. Proteolytically removed during virion maturation. The processing of the C-terminus turns the precursor into a mature viral structural protein and abrogates its ability to promote hexon import and act as a potential chaperone protein.

Its subcellular location is the host nucleus. The protein localises to the host cytoplasm. The protein resides in the virion. In terms of biological role, during virus assembly, promotes hexon trimers nuclear import through nuclear pore complexes via an importin alpha/beta-dependent mechanism. By analogy to herpesviruses capsid assembly, might act as a chaperone to promote the formation of the icosahedral capsid. Structural component of the virion that provides increased stability to the particle shell through its interaction with the core-capsid bridging protein and the hexon-linking protein VIII. Fibers shedding during virus entry into host cell allows the endosome lysis protein to be exposed as a membrane-lytic peptide. Exhibits pH-independent membrane fragmentation activity and probably mediates viral rapid escape from host endosome via organellar membrane lysis. It is not clear if it then remains partially associated with the capsid and involved in the intracellular microtubule-dependent transport of capsid to the nucleus, or if it is lost during endosomal penetration. Its function is as follows. Cofactor that activates the viral protease. Binds to viral protease in a 1:1 ratio. This chain is Pre-protein VI, found in Homo sapiens (Human).